The chain runs to 272 residues: Glutamate racemase (272 aa).

Substrate is bound by residues 13-14 (DS) and 45-46 (YG). Residue cysteine 76 is the Proton donor/acceptor of the active site. Position 77 to 78 (77 to 78 (NT)) interacts with substrate. Cysteine 186 functions as the Proton donor/acceptor in the catalytic mechanism. Residue 187–188 (TH) coordinates substrate.

It belongs to the aspartate/glutamate racemases family.

It catalyses the reaction L-glutamate = D-glutamate. Its pathway is cell wall biogenesis; peptidoglycan biosynthesis. Functionally, provides the (R)-glutamate required for cell wall biosynthesis. This Cupriavidus pinatubonensis (strain JMP 134 / LMG 1197) (Cupriavidus necator (strain JMP 134)) protein is Glutamate racemase.